Reading from the N-terminus, the 262-residue chain is Acyl-[acyl-carrier-protein]--UDP-N-acetylglucosamine O-acyltransferase (262 aa).

Belongs to the transferase hexapeptide repeat family. LpxA subfamily. As to quaternary structure, homotrimer.

It is found in the cytoplasm. The catalysed reaction is a (3R)-hydroxyacyl-[ACP] + UDP-N-acetyl-alpha-D-glucosamine = a UDP-3-O-[(3R)-3-hydroxyacyl]-N-acetyl-alpha-D-glucosamine + holo-[ACP]. Its pathway is glycolipid biosynthesis; lipid IV(A) biosynthesis; lipid IV(A) from (3R)-3-hydroxytetradecanoyl-[acyl-carrier-protein] and UDP-N-acetyl-alpha-D-glucosamine: step 1/6. Its function is as follows. Involved in the biosynthesis of lipid A, a phosphorylated glycolipid that anchors the lipopolysaccharide to the outer membrane of the cell. The chain is Acyl-[acyl-carrier-protein]--UDP-N-acetylglucosamine O-acyltransferase from Pectobacterium atrosepticum (strain SCRI 1043 / ATCC BAA-672) (Erwinia carotovora subsp. atroseptica).